Reading from the N-terminus, the 530-residue chain is AAA-ATPase At3g28510 (530 aa).

A helical membrane pass occupies residues 5–25 (GAIWGITGTTVTSFMFFWAIY). 250–257 (GPPGTGKS) is an ATP binding site. Disordered stretches follow at residues 312 to 339 (QRKK…KVDD) and 463 to 530 (KARK…KSDS). Composition is skewed to basic and acidic residues over residues 326–339 (EEKK…KVDD) and 463–511 (KARK…KEEN). Over residues 512 to 523 (GNVSQQNGNSID) the composition is skewed to polar residues.

Belongs to the AAA ATPase family. BCS1 subfamily. It depends on Mg(2+) as a cofactor.

Its subcellular location is the membrane. The catalysed reaction is ATP + H2O = ADP + phosphate + H(+). This chain is AAA-ATPase At3g28510, found in Arabidopsis thaliana (Mouse-ear cress).